The chain runs to 140 residues: ISDra2 transposase TnpA (140 aa).

Mg(2+) is bound by residues His-67 and His-69. The mobile alpha helix stretch occupies residues 127–133 (AQIQKYI). Residue Tyr-132 is the Nucleophile of the active site. Residue Gln-136 participates in Mg(2+) binding.

Belongs to the transposase 17 family. Homodimer. Mg(2+) serves as cofactor.

Its activity is regulated as follows. Both the excision and insertion steps are inhibited by TnpB. A transposase that is part of insertion sequence (IS) element ISDra2, it is necessary and sufficient for both transposon excision and insertion of ISDra2. This protein alone can be provided in trans and allows transposition of an empty IS element (tnpA or tnpA-tnpB replaced by a selectable marker). ISDra2 binds subterminal imperfect palindromes at the left (LE) and right (RE) ends of the element and cleaves only the 'top strand' which is circularized and subsequently reinserted into the DNA target. This is called a 'peel and paste' mechanism and increases the copy number of the IS. Transposition is linked to DNA replication in the absence of irradiation, with maximal activity when the 'top strand' is on the replication lagging strand, and occurs preferentially on the lagging strand. The IS element inserts 3' of the target sequence 5'-TTGAT-3'; target duplication has not been observed. In Deinococcus radiodurans (strain ATCC 13939 / DSM 20539 / JCM 16871 / CCUG 27074 / LMG 4051 / NBRC 15346 / NCIMB 9279 / VKM B-1422 / R1), this protein is ISDra2 transposase TnpA.